A 204-amino-acid chain; its full sequence is Ribosomal RNA small subunit methyltransferase G (204 aa).

3 residues coordinate S-adenosyl-L-methionine: Gly73, Phe78, and Arg139.

This sequence belongs to the methyltransferase superfamily. RNA methyltransferase RsmG family.

It localises to the cytoplasm. The enzyme catalyses guanosine(527) in 16S rRNA + S-adenosyl-L-methionine = N(7)-methylguanosine(527) in 16S rRNA + S-adenosyl-L-homocysteine. In terms of biological role, specifically methylates the N7 position of guanine in position 527 of 16S rRNA. The protein is Ribosomal RNA small subunit methyltransferase G of Coxiella burnetii (strain RSA 331 / Henzerling II).